The primary structure comprises 492 residues: N-succinylglutamate 5-semialdehyde dehydrogenase (492 aa).

Residue 220 to 225 participates in NAD(+) binding; that stretch reads GSASTG. Catalysis depends on residues Glu243 and Cys277.

The protein belongs to the aldehyde dehydrogenase family. AstD subfamily.

The catalysed reaction is N-succinyl-L-glutamate 5-semialdehyde + NAD(+) + H2O = N-succinyl-L-glutamate + NADH + 2 H(+). It functions in the pathway amino-acid degradation; L-arginine degradation via AST pathway; L-glutamate and succinate from L-arginine: step 4/5. Functionally, catalyzes the NAD-dependent reduction of succinylglutamate semialdehyde into succinylglutamate. The chain is N-succinylglutamate 5-semialdehyde dehydrogenase from Salmonella schwarzengrund (strain CVM19633).